Here is a 249-residue protein sequence, read N- to C-terminus: Large ribosomal subunit protein uL22m (249 aa).

The transit peptide at 1–22 (MKYINQFMKISKGFLVPSSTIG) directs the protein to the mitochondrion. Residues 70-98 (ANQKDDSNRQQKEERVKERPRSRISFKKQ) are disordered. The segment covering 72–98 (QKDDSNRQQKEERVKERPRSRISFKKQ) has biased composition (basic and acidic residues).

The protein belongs to the universal ribosomal protein uL22 family. As to quaternary structure, component of the mitochondrial large ribosomal subunit (mt-LSU). Mature yeast 74S mitochondrial ribosomes consist of a small (37S) and a large (54S) subunit. The 37S small subunit contains a 15S ribosomal RNA (15S mt-rRNA) and at least 32 different proteins. The 54S large subunit contains a 21S rRNA (21S mt-rRNA) and at least 45 different proteins. uL22m forms the wall of the exit tunnel.

It localises to the mitochondrion. Functionally, component of the mitochondrial ribosome (mitoribosome), a dedicated translation machinery responsible for the synthesis of mitochondrial genome-encoded proteins, including at least some of the essential transmembrane subunits of the mitochondrial respiratory chain. The mitoribosomes are attached to the mitochondrial inner membrane and translation products are cotranslationally integrated into the membrane. This is Large ribosomal subunit protein uL22m (mrpl22) from Schizosaccharomyces pombe (strain 972 / ATCC 24843) (Fission yeast).